A 203-amino-acid polypeptide reads, in one-letter code: NAD(P)H dehydrogenase (quinone) (203 aa).

The 192-residue stretch at 3 to 194 (VLIAYYSMYG…AAARYQGKHV (192 aa)) folds into the Flavodoxin-like domain. FMN-binding positions include 9–14 (SMYGHI) and 82–84 (TRF). Tyr11 serves as a coordination point for NAD(+). Trp102 provides a ligand contact to substrate. FMN is bound by residues 117–123 (SSATQHG) and His138.

This sequence belongs to the WrbA family. Requires FMN as cofactor.

It catalyses the reaction a quinone + NADH + H(+) = a quinol + NAD(+). The enzyme catalyses a quinone + NADPH + H(+) = a quinol + NADP(+). This chain is NAD(P)H dehydrogenase (quinone), found in Geotalea uraniireducens (strain Rf4) (Geobacter uraniireducens).